The following is a 290-amino-acid chain: Short neuropeptide F (290 aa).

Residues 1–32 (MFRFNPQLSHGCALALICCLLNLLMMHQPTNA) form the signal peptide. The propeptide occupies 33-87 (ELSPVVQGEFFLPILPDDHPPNTDTSFGGPISNLYDNLLQREYAGPVVFPNHQVE). Phe100 and Phe134 each carry phenylalanine amide. A propeptide spanning residues 138–290 (DPTLPQMRRT…IETSSIAPKN (153 aa)) is cleaved from the precursor. Positions 238-290 (VAGYANDGDDTEAQLDEDTSEFQREARKPMRLRWGRSTGKAPQIETSSIAPKN) are disordered. The span at 244–257 (DGDDTEAQLDEDTS) shows a compositional bias: acidic residues. Polar residues predominate over residues 281–290 (IETSSIAPKN).

Belongs to the NPY family.

Its subcellular location is the secreted. Functionally, plays a role in controlling food intake and regulating body size. This Drosophila pseudoobscura pseudoobscura (Fruit fly) protein is Short neuropeptide F.